Here is a 100-residue protein sequence, read N- to C-terminus: MHAIVVCGAKQYLVHENESIFVEKLAGKVGQEIQLDKVLMLDEKIGKPYLEKAKVVCVIEKHGLKSKIKLIKHISQKHHLKRYGHRQPYTKLKVVRFIHD.

The protein belongs to the bacterial ribosomal protein bL21 family. Part of the 50S ribosomal subunit. Contacts protein L20.

This protein binds to 23S rRNA in the presence of protein L20. The polypeptide is Large ribosomal subunit protein bL21 (Mycoplasma genitalium (strain ATCC 33530 / DSM 19775 / NCTC 10195 / G37) (Mycoplasmoides genitalium)).